The following is a 407-amino-acid chain: Tyrosine--tRNA ligase (407 aa).

Residue Tyr35 coordinates L-tyrosine. The 'HIGH' region signature appears at 40–49; that stretch reads PTADSLHVGH. Residues Tyr168 and Gln172 each contribute to the L-tyrosine site. The 'KMSKS' region motif lies at 228-232; it reads KMGKT. Residue Lys231 coordinates ATP. Residues 341–405 form the S4 RNA-binding domain; that stretch reads NSLVDLLAKC…RGKKNFNRIV (65 aa).

The protein belongs to the class-I aminoacyl-tRNA synthetase family. TyrS type 1 subfamily. Homodimer.

It localises to the cytoplasm. It carries out the reaction tRNA(Tyr) + L-tyrosine + ATP = L-tyrosyl-tRNA(Tyr) + AMP + diphosphate + H(+). Functionally, catalyzes the attachment of tyrosine to tRNA(Tyr) in a two-step reaction: tyrosine is first activated by ATP to form Tyr-AMP and then transferred to the acceptor end of tRNA(Tyr). This chain is Tyrosine--tRNA ligase, found in Clostridium botulinum (strain Loch Maree / Type A3).